The chain runs to 1151 residues: Zinc finger protein ZFPM2 (1151 aa).

Positions 1 to 13 (MSRRKQSKPRQIK) are enriched in basic residues. The tract at residues 1 to 102 (MSRRKQSKPR…ETDDWDGPGE (102 aa)) is disordered. 2 stretches are compositionally biased toward acidic residues: residues 18–33 (DAIE…EETD) and 70–82 (EGIQ…DGDT). Residues 244–277 (IVNKDIFPCKSCGIWYRSERNLQAHLMYYCSGRQ) form a CCHC FOG-type 1 zinc finger. Residues Cys-252, Cys-255, His-268, and Cys-273 each contribute to the Zn(2+) site. The C2H2-type 1 zinc finger occupies 296–320 (SLCPFPQCTKSFSNARALEMHLNSH). Lys-324 participates in a covalent cross-link: Glycyl lysine isopeptide (Lys-Gly) (interchain with G-Cter in SUMO1). 2 C2H2-type zinc fingers span residues 335–357 (LKCT…LFSH) and 363–385 (FRCN…QELH). The tract at residues 389–487 (GKLPRESDME…RLASSPVQPN (99 aa)) is disordered. 2 stretches are compositionally biased toward polar residues: residues 401–410 (PSATEDSLQP) and 419–431 (ELPQ…QTKD). Lys-444 is covalently cross-linked (Glycyl lysine isopeptide (Lys-Gly) (interchain with G-Cter in SUMO2)). Polar residues predominate over residues 447-485 (LFLTNQRPEIQPTTNKQSFSYTKIKSEPSSPRLASSPVQ). Lys-471 is covalently cross-linked (Glycyl lysine isopeptide (Lys-Gly) (interchain with G-Cter in SUMO1)). At Ser-532 the chain carries Phosphoserine. A CCHC FOG-type 2 zinc finger spans residues 542–575 (PLMPKGATCFECNITFNNLDNYLVHKKHYCSSRW). Residues Cys-550, Cys-553, His-566, and Cys-571 each coordinate Zn(2+). Ser-581 carries the phosphoserine modification. Residues 636-683 (GPNGKGHDKDFSTQTKKLSTSSNNDDKINGKPVDVKNPSVPLVDGESD) form a disordered region. Residues 647-658 (STQTKKLSTSSN) show a composition bias toward polar residues. The CCHC FOG-type 3 zinc-finger motif lies at 681 to 714 (ESDPNKTTCEACNITFSRHETYMVHKQYYCATRH). 4 residues coordinate Zn(2+): Cys-689, Cys-692, His-705, and Cys-710. A Nuclear localization signal motif is present at residues 736 to 740 (RKRRK). The interaction with CTBP2 stretch occupies residues 829-835 (PIDLSKK). Residues 848-881 (KRLLDYHECTVCKISFNKVENYLAHKQNFCPVTA) form a CCHC FOG-type 4 zinc finger. Positions 856, 859, 872, and 877 each coordinate Zn(2+). Ser-904 bears the Phosphoserine mark. Glycyl lysine isopeptide (Lys-Gly) (interchain with G-Cter in SUMO1) cross-links involve residues Lys-915 and Lys-955. The residue at position 1014 (Ser-1014) is a Phosphoserine. The disordered stretch occupies residues 1051 to 1095 (DERPAANPQQENISQNPQHEDDHKSPSWISENPLAANENVSPGIP). A compositionally biased stretch (polar residues) spans 1057–1067 (NPQQENISQNP). Residues 1113 to 1146 (QAPTSGKYCRLCDIQFNNLSNFITHKKFYCSSHA) form a CCHC FOG-type 5 zinc finger. Zn(2+) contacts are provided by Cys-1121, Cys-1124, His-1137, and Cys-1142.

It belongs to the FOG (Friend of GATA) family. Interacts with the N-terminal zinc-finger of GATA4, GATA5 and probably GATA6. Interacts with retinoid nuclear receptor RXRA when ligand bound. Interacts with corepressor CTBP2; this interaction is however not essential for corepressor activity. Able to bind GATA1 in vitro. Interacts with NR2F2 and NR2F6. Interacts with ATOH8; mediates indirect interaction with GATA4. Sumoylation reduces transcriptional repression activity. In terms of tissue distribution, widely expressed at low level.

It is found in the nucleus. Transcription regulator that plays a central role in heart morphogenesis and development of coronary vessels from epicardium, by regulating genes that are essential during cardiogenesis. Essential cofactor that acts via the formation of a heterodimer with transcription factors of the GATA family GATA4, GATA5 and GATA6. Such heterodimer can both activate or repress transcriptional activity, depending on the cell and promoter context. Also required in gonadal differentiation, possibly be regulating expression of SRY. Probably acts a corepressor of NR2F2. In Homo sapiens (Human), this protein is Zinc finger protein ZFPM2 (ZFPM2).